Consider the following 139-residue polypeptide: Putative pre-16S rRNA nuclease (139 aa).

The protein belongs to the YqgF nuclease family.

Its subcellular location is the cytoplasm. In terms of biological role, could be a nuclease involved in processing of the 5'-end of pre-16S rRNA. The chain is Putative pre-16S rRNA nuclease from Pectobacterium carotovorum subsp. carotovorum (strain PC1).